The following is a 776-amino-acid chain: Protein FAM83C (776 aa).

The DUF1669 stretch occupies residues 1-340; sequence MQGCQAGASI…LYAESQPVEG (340 aa). Disordered regions lie at residues 344-467, 494-565, 617-653, 669-694, and 716-745; these read NEDP…STSP, SRLP…SLQH, HGQL…DDRR, PFRS…VGSA, and QGAR…LFAP. The span at 368–385 shows a compositional bias: low complexity; the sequence is SATGSSPSSNSLSSIKHS. Polar residues predominate over residues 452-467; the sequence is PWSQSSPALNHSSTSP. Basic and acidic residues predominate over residues 523–539; it reads VEEKKVSLSQSHDHLDR. Residues 554-563 are compositionally biased toward polar residues; sequence SRVTPDSSSL.

Belongs to the FAM83 family. In terms of assembly, directly interacts (via DUF1669) with CSNK1A1 and CSNK1A1L. May interact with RAF1. Post-translationally, phosphorylated by CSNK1A1.

The protein localises to the cytoplasm. In terms of biological role, may play a role in MAPK signaling. The chain is Protein FAM83C from Mus musculus (Mouse).